A 328-amino-acid chain; its full sequence is Beta-ketoacyl-[acyl-carrier-protein] synthase III (328 aa).

Residues cysteine 122 and histidine 255 contribute to the active site. The segment at 256-260 is ACP-binding; sequence QANIR. The active site involves asparagine 285.

The protein belongs to the thiolase-like superfamily. FabH family. As to quaternary structure, homodimer.

Its subcellular location is the cytoplasm. The enzyme catalyses malonyl-[ACP] + acetyl-CoA + H(+) = 3-oxobutanoyl-[ACP] + CO2 + CoA. It functions in the pathway lipid metabolism; fatty acid biosynthesis. Functionally, catalyzes the condensation reaction of fatty acid synthesis by the addition to an acyl acceptor of two carbons from malonyl-ACP. Catalyzes the first condensation reaction which initiates fatty acid synthesis and may therefore play a role in governing the total rate of fatty acid production. Possesses both acetoacetyl-ACP synthase and acetyl transacylase activities. Its substrate specificity determines the biosynthesis of branched-chain and/or straight-chain of fatty acids. The chain is Beta-ketoacyl-[acyl-carrier-protein] synthase III from Janthinobacterium sp. (strain Marseille) (Minibacterium massiliensis).